A 544-amino-acid polypeptide reads, in one-letter code: Chaperonin GroEL (544 aa).

Residues 30–33 (TLGP), Lys-51, 87–91 (DGTTT), Gly-415, 479–481 (NAA), and Asp-495 each bind ATP.

It belongs to the chaperonin (HSP60) family. As to quaternary structure, forms a cylinder of 14 subunits composed of two heptameric rings stacked back-to-back. Interacts with the co-chaperonin GroES.

The protein localises to the cytoplasm. It catalyses the reaction ATP + H2O + a folded polypeptide = ADP + phosphate + an unfolded polypeptide.. Together with its co-chaperonin GroES, plays an essential role in assisting protein folding. The GroEL-GroES system forms a nano-cage that allows encapsulation of the non-native substrate proteins and provides a physical environment optimized to promote and accelerate protein folding. This chain is Chaperonin GroEL, found in Acinetobacter baylyi (strain ATCC 33305 / BD413 / ADP1).